A 385-amino-acid chain; its full sequence is Glucans biosynthesis protein C (385 aa).

10 consecutive transmembrane segments (helical) span residues 17-39 (AWLMLLGIPFHISLIYSSHTWHV), 54-76 (FIHSFRMQVFFVISGYFSYMLFL), 88-110 (VERVGIPMLTAIPLLTLPQFIML), 136-158 (LISHLWFLLVLVVMTTLCVWIFK), 179-198 (LSVIFLCLGIGYAVIRRTIF), 213-235 (IVMQTLFYLPFFILGALAFIFPH), 242-261 (TPSRGCTLAAALAFVAYLLN), 276-295 (SVITMVLGLWMVNVVFSFGH), 308-330 (FVNASLFIYLVHHPLTLFFGAYI), and 334-356 (ITSNWLGFLCGLIFVVGIAIILY).

This sequence belongs to the acyltransferase 3 family. OpgC subfamily.

It localises to the cell membrane. It functions in the pathway glycan metabolism; osmoregulated periplasmic glucan (OPG) biosynthesis. Functionally, necessary for the succinyl substitution of periplasmic glucans. Could catalyze the transfer of succinyl residues from the cytoplasmic side of the membrane to the nascent glucan backbones on the periplasmic side of the membrane. This chain is Glucans biosynthesis protein C, found in Escherichia coli O157:H7.